A 228-amino-acid chain; its full sequence is PKHD-type hydroxylase Rmet_3078 (228 aa).

A Fe2OG dioxygenase domain is found at 80-180 (IVYPPMFNRY…RVGCFFWIQS (101 aa)). Residues histidine 98, aspartate 100, and histidine 161 each coordinate Fe cation. Arginine 171 contributes to the 2-oxoglutarate binding site.

Requires Fe(2+) as cofactor. L-ascorbate is required as a cofactor.

This Cupriavidus metallidurans (strain ATCC 43123 / DSM 2839 / NBRC 102507 / CH34) (Ralstonia metallidurans) protein is PKHD-type hydroxylase Rmet_3078.